Here is a 446-residue protein sequence, read N- to C-terminus: Tubulin alpha chain-like 3 (446 aa).

The short motif at 1 to 4 (MREC) is the MREC motif element. GTP contacts are provided by Gln-11, Glu-78, Ser-147, Gly-151, Thr-152, Thr-186, Asn-213, and Asn-235. Glu-78 serves as a coordination point for Mg(2+). The active site involves Glu-261.

Belongs to the tubulin family. In terms of assembly, dimer of alpha and beta chains. A typical microtubule is a hollow water-filled tube with an outer diameter of 25 nm and an inner diameter of 15 nM. Alpha-beta heterodimers associate head-to-tail to form protofilaments running lengthwise along the microtubule wall with the beta-tubulin subunit facing the microtubule plus end conferring a structural polarity. Microtubules usually have 13 protofilaments but different protofilament numbers can be found in some organisms and specialized cells. The cofactor is Mg(2+). Some glutamate residues at the C-terminus are polyglutamylated, resulting in polyglutamate chains on the gamma-carboxyl group. Polyglutamylation plays a key role in microtubule severing by spastin (SPAST). SPAST preferentially recognizes and acts on microtubules decorated with short polyglutamate tails: severing activity by SPAST increases as the number of glutamates per tubulin rises from one to eight, but decreases beyond this glutamylation threshold. Glutamylation is also involved in cilia motility. Post-translationally, some glutamate residues at the C-terminus are monoglycylated but not polyglycylated due to the absence of functional TTLL10 in human. Monoglycylation is mainly limited to tubulin incorporated into cilia and flagella axonemes, which is required for their stability and maintenance. Flagella glycylation controls sperm motility. Both polyglutamylation and monoglycylation can coexist on the same protein on adjacent residues, and lowering glycylation levels increases polyglutamylation, and reciprocally.

The protein resides in the cytoplasm. The protein localises to the cytoskeleton. It carries out the reaction GTP + H2O = GDP + phosphate + H(+). Functionally, tubulin is the major constituent of microtubules, a cylinder consisting of laterally associated linear protofilaments composed of alpha- and beta-tubulin heterodimers. Microtubules grow by the addition of GTP-tubulin dimers to the microtubule end, where a stabilizing cap forms. Below the cap, tubulin dimers are in GDP-bound state, owing to GTPase activity of alpha-tubulin. This is Tubulin alpha chain-like 3 (TUBAL3) from Homo sapiens (Human).